The following is a 115-amino-acid chain: uncharacterized protein (115 aa).

A helical transmembrane segment spans residues 36–56; the sequence is SFFSLGLIACFCIFLIIVLSE.

Its subcellular location is the membrane. This is an uncharacterized protein from Saccharomyces cerevisiae (strain ATCC 204508 / S288c) (Baker's yeast).